Reading from the N-terminus, the 89-residue chain is Conotoxin Bu5 (89 aa).

An N-terminal signal peptide occupies residues 1–22 (MKLTCVLIVAVLFLTACQLATA). Residues 23–49 (ENSREEQGYSAVRSSDQIQDSDLKLTK) constitute a propeptide that is removed on maturation. Intrachain disulfides connect Cys-51-Cys-66, Cys-58-Cys-70, and Cys-65-Cys-79. Cysteine amide is present on Cys-79. A propeptide spanning residues 80–89 (GVSIDYYDSR) is cleaved from the precursor.

The protein belongs to the conotoxin O1 superfamily. As to expression, expressed by the venom duct.

Its subcellular location is the secreted. This chain is Conotoxin Bu5, found in Conus bullatus (Bubble cone).